The chain runs to 159 residues: MRCPKCGYNKSSVVDSRQAEEGTTIRRRRECEKCGNRFTTFERLEELPLLVIKKDGTREQFSRDKILNGIIQSAQKRPVSSEDIENCILRIERKIRSEYEDEVSSITIGNLVMDELAELDEITYVRFASVYKSFKDVDEIEELLQQITKRVRSKKSGSV.

The segment at 3 to 34 (CPKCGYNKSSVVDSRQAEEGTTIRRRRECEKC) is a zinc-finger region. In terms of domain architecture, ATP-cone spans 49–139 (LLVIKKDGTR…VYKSFKDVDE (91 aa)).

Belongs to the NrdR family. It depends on Zn(2+) as a cofactor.

Negatively regulates transcription of bacterial ribonucleotide reductase nrd genes and operons by binding to NrdR-boxes. This Streptococcus agalactiae serotype Ia (strain ATCC 27591 / A909 / CDC SS700) protein is Transcriptional repressor NrdR.